The sequence spans 309 residues: UDP-N-acetylenolpyruvoylglucosamine reductase (309 aa).

Positions 34–198 constitute an FAD-binding PCMH-type domain; the sequence is RVGGPAEVMF…VRARLHARPG (165 aa). R178 is an active-site residue. Catalysis depends on S227, which acts as the Proton donor. E297 is an active-site residue.

The protein belongs to the MurB family. FAD is required as a cofactor.

It is found in the cytoplasm. It catalyses the reaction UDP-N-acetyl-alpha-D-muramate + NADP(+) = UDP-N-acetyl-3-O-(1-carboxyvinyl)-alpha-D-glucosamine + NADPH + H(+). It participates in cell wall biogenesis; peptidoglycan biosynthesis. In terms of biological role, cell wall formation. The sequence is that of UDP-N-acetylenolpyruvoylglucosamine reductase from Acidiphilium cryptum (strain JF-5).